A 187-amino-acid polypeptide reads, in one-letter code: Large ribosomal subunit protein bL25 (187 aa).

It belongs to the bacterial ribosomal protein bL25 family. CTC subfamily. As to quaternary structure, part of the 50S ribosomal subunit; part of the 5S rRNA/L5/L18/L25 subcomplex. Contacts the 5S rRNA. Binds to the 5S rRNA independently of L5 and L18.

Its function is as follows. This is one of the proteins that binds to the 5S RNA in the ribosome where it forms part of the central protuberance. In Tropheryma whipplei (strain TW08/27) (Whipple's bacillus), this protein is Large ribosomal subunit protein bL25.